The sequence spans 732 residues: S-adenosyl-L-methionine-dependent tRNA 4-demethylwyosine synthase TYW1 (732 aa).

The Flavodoxin-like domain maps to 79 to 237; sequence VKIFYGSQTG…DFRAWKTKFI (159 aa). FMN is bound by residues 85 to 89 and 176 to 208; these read SQTGT and VFGLGNSAYASHFNKVGKNVDKWLWMLGAHRVM. Residues 248–314 form a disordered region; it reads RKKSCGGHCK…HQSLNSIVDV (67 aa). Residues 259 to 286 are compositionally biased toward basic and acidic residues; it reads GKCESHQHGSEEREEGSHEQDELHHRDT. Positions 287–301 are enriched in acidic residues; sequence EEEEPFESSSEEEFG. The Radical SAM core domain maps to 400-644; that stretch reads YGIESHRCME…VDLIPEYEIA (245 aa). [4Fe-4S] cluster is bound by residues Cys416, Cys420, and Cys423.

This sequence belongs to the TYW1 family. Requires [4Fe-4S] cluster as cofactor.

It catalyses the reaction N(1)-methylguanosine(37) in tRNA(Phe) + pyruvate + S-adenosyl-L-methionine = 4-demethylwyosine(37) in tRNA(Phe) + 5'-deoxyadenosine + L-methionine + CO2 + H2O. It functions in the pathway tRNA modification; wybutosine-tRNA(Phe) biosynthesis. Probable component of the wybutosine biosynthesis pathway. Wybutosine is a hyper modified guanosine with a tricyclic base found at the 3'-position adjacent to the anticodon of eukaryotic phenylalanine tRNA. Catalyzes the condensation of N-methylguanine with 2 carbon atoms from pyruvate to form the tricyclic 4-demethylwyosine, an intermediate in wybutosine biosynthesis. The chain is S-adenosyl-L-methionine-dependent tRNA 4-demethylwyosine synthase TYW1 (TYW1) from Homo sapiens (Human).